A 364-amino-acid chain; its full sequence is Adenosine 3'-phospho 5'-phosphosulfate transporter 2 (364 aa).

10 consecutive transmembrane segments (helical) span residues 39 to 59 (WLQF…YGYM), 74 to 94 (WTLT…ECII), 106 to 126 (IYGV…ASVG), 131 to 151 (PTQV…GILI), 157 to 177 (GWID…FTLA), 187 to 206 (SRGY…IGNI), 231 to 251 (VFIF…PFFL), 257 to 277 (TFGY…VVLT), 281 to 301 (VFGA…TIIL), and 310 to 330 (FTIE…LNLY).

This sequence belongs to the nucleotide-sugar transporter family. SLC35B subfamily.

It localises to the golgi apparatus membrane. Mediates the transport of adenosine 3'-phospho 5'-phosphosulfate (PAPS), from cytosol into Golgi. PAPS is a universal sulfuryl donor for sulfation events that take place in the Golgi. This is Adenosine 3'-phospho 5'-phosphosulfate transporter 2 (pst-2) from Caenorhabditis elegans.